A 378-amino-acid chain; its full sequence is Carbamoyl phosphate synthase small chain (378 aa).

A CPSase region spans residues 1–189 (MTKPAILALA…DSHPTIDAAD (189 aa)). 3 residues coordinate L-glutamine: Ser-47, Gly-241, and Gly-243. The 186-residue stretch at 193 to 378 (HVVAFDYGVK…RFTDAMAKRR (186 aa)) folds into the Glutamine amidotransferase type-1 domain. Cys-269 functions as the Nucleophile in the catalytic mechanism. L-glutamine contacts are provided by Leu-270, Gln-273, Asn-311, Gly-313, and Phe-314. Active-site residues include His-353 and Glu-355.

This sequence belongs to the CarA family. In terms of assembly, composed of two chains; the small (or glutamine) chain promotes the hydrolysis of glutamine to ammonia, which is used by the large (or ammonia) chain to synthesize carbamoyl phosphate. Tetramer of heterodimers (alpha,beta)4.

It catalyses the reaction hydrogencarbonate + L-glutamine + 2 ATP + H2O = carbamoyl phosphate + L-glutamate + 2 ADP + phosphate + 2 H(+). It carries out the reaction L-glutamine + H2O = L-glutamate + NH4(+). It functions in the pathway amino-acid biosynthesis; L-arginine biosynthesis; carbamoyl phosphate from bicarbonate: step 1/1. It participates in pyrimidine metabolism; UMP biosynthesis via de novo pathway; (S)-dihydroorotate from bicarbonate: step 1/3. Functionally, small subunit of the glutamine-dependent carbamoyl phosphate synthetase (CPSase). CPSase catalyzes the formation of carbamoyl phosphate from the ammonia moiety of glutamine, carbonate, and phosphate donated by ATP, constituting the first step of 2 biosynthetic pathways, one leading to arginine and/or urea and the other to pyrimidine nucleotides. The small subunit (glutamine amidotransferase) binds and cleaves glutamine to supply the large subunit with the substrate ammonia. This is Carbamoyl phosphate synthase small chain from Pseudomonas putida (strain ATCC 47054 / DSM 6125 / CFBP 8728 / NCIMB 11950 / KT2440).